A 502-amino-acid polypeptide reads, in one-letter code: MSTDATLSFEEAMEKYDPVLGFEVHVELNTKTKMFSSAPNVFGDEPNTNVNEVDLGMPGVLPVVNKTAIESSIKIGLALNCKIAETCRFARKNYFYPDTPKNFQTSQYDEPIAYDGYLDIELSDGTVFRVEIERAHMEEDAGKLTHMGGSAGRIQGADYSLVDYNRSGVPLVEIVTKPIQGAGSRAPELAKAYVAAVREIVKNLGVSDAKMERGNVRCDANVSLRPHGRERFGIRSETKNVNSLRAVEHAVRYEIQRHAAVLDSGEPVIQETRHWHEDTRSTTSGRAKSDADDYRYFPEPDLVPIVASREWVEELRATLPEPPAERRKRLQADWGYSDLEFRDVVNAGVMDEIEETIAAGATATVARKWWMGEIVGRAKNADVDPGQLGVKPETIVELNKMVEAGKINNKMAAEVLDGVLAGEGTPAEIVEKRGLAVVSDDGPLLEAIDAALAAQPDVADKIRGGKVQAIGAIVGGVMKATRGQADAGRVRELILERLGVEG.

The protein belongs to the GatB/GatE family. GatB subfamily. Heterotrimer of A, B and C subunits.

It catalyses the reaction L-glutamyl-tRNA(Gln) + L-glutamine + ATP + H2O = L-glutaminyl-tRNA(Gln) + L-glutamate + ADP + phosphate + H(+). It carries out the reaction L-aspartyl-tRNA(Asn) + L-glutamine + ATP + H2O = L-asparaginyl-tRNA(Asn) + L-glutamate + ADP + phosphate + 2 H(+). Its function is as follows. Allows the formation of correctly charged Asn-tRNA(Asn) or Gln-tRNA(Gln) through the transamidation of misacylated Asp-tRNA(Asn) or Glu-tRNA(Gln) in organisms which lack either or both of asparaginyl-tRNA or glutaminyl-tRNA synthetases. The reaction takes place in the presence of glutamine and ATP through an activated phospho-Asp-tRNA(Asn) or phospho-Glu-tRNA(Gln). This Arthrobacter sp. (strain FB24) protein is Aspartyl/glutamyl-tRNA(Asn/Gln) amidotransferase subunit B.